The sequence spans 435 residues: Cyclic 2,3-diphosphoglycerate synthetase (435 aa).

Belongs to the cyclic 2,3-diphosphoglycerate synthetase family.

Its subcellular location is the cytoplasm. It catalyses the reaction (2R)-2,3-bisphosphoglycerate + ATP + H(+) = cyclic (2R)-2,3-bisphosphoglycerate + ADP + phosphate. Catalyzes the formation of cyclic 2,3-diphosphoglycerate (cDPG) by formation of an intramolecular phosphoanhydride bond at the expense of ATP. In Pyrococcus horikoshii (strain ATCC 700860 / DSM 12428 / JCM 9974 / NBRC 100139 / OT-3), this protein is Cyclic 2,3-diphosphoglycerate synthetase.